The chain runs to 271 residues: Formamidopyrimidine-DNA glycosylase (271 aa).

Residue Pro-2 is the Schiff-base intermediate with DNA of the active site. Glu-3 (proton donor) is an active-site residue. Lys-57 serves as the catalytic Proton donor; for beta-elimination activity. Residues His-90, Arg-109, and Lys-151 each contribute to the DNA site. The FPG-type zinc finger occupies 236–270 (HVYGRGGETCTECGHLLSEIRLGQRTTVFCSLCQT). Arg-260 (proton donor; for delta-elimination activity) is an active-site residue.

It belongs to the FPG family. As to quaternary structure, monomer. Zn(2+) is required as a cofactor.

The catalysed reaction is Hydrolysis of DNA containing ring-opened 7-methylguanine residues, releasing 2,6-diamino-4-hydroxy-5-(N-methyl)formamidopyrimidine.. The enzyme catalyses 2'-deoxyribonucleotide-(2'-deoxyribose 5'-phosphate)-2'-deoxyribonucleotide-DNA = a 3'-end 2'-deoxyribonucleotide-(2,3-dehydro-2,3-deoxyribose 5'-phosphate)-DNA + a 5'-end 5'-phospho-2'-deoxyribonucleoside-DNA + H(+). Its function is as follows. Involved in base excision repair of DNA damaged by oxidation or by mutagenic agents. Acts as a DNA glycosylase that recognizes and removes damaged bases. Has a preference for oxidized purines, such as 7,8-dihydro-8-oxoguanine (8-oxoG). Has AP (apurinic/apyrimidinic) lyase activity and introduces nicks in the DNA strand. Cleaves the DNA backbone by beta-delta elimination to generate a single-strand break at the site of the removed base with both 3'- and 5'-phosphates. The protein is Formamidopyrimidine-DNA glycosylase of Shewanella amazonensis (strain ATCC BAA-1098 / SB2B).